We begin with the raw amino-acid sequence, 599 residues long: Elongation factor 4 (599 aa).

The tr-type G domain maps to 2-184; that stretch reads KNIRNFSIIA…EIVAKIPAPK (183 aa). GTP-binding positions include 14–19 and 131–134; these read DHGKST and NKID.

It belongs to the TRAFAC class translation factor GTPase superfamily. Classic translation factor GTPase family. LepA subfamily.

The protein localises to the cell inner membrane. The catalysed reaction is GTP + H2O = GDP + phosphate + H(+). Its function is as follows. Required for accurate and efficient protein synthesis under certain stress conditions. May act as a fidelity factor of the translation reaction, by catalyzing a one-codon backward translocation of tRNAs on improperly translocated ribosomes. Back-translocation proceeds from a post-translocation (POST) complex to a pre-translocation (PRE) complex, thus giving elongation factor G a second chance to translocate the tRNAs correctly. Binds to ribosomes in a GTP-dependent manner. The protein is Elongation factor 4 of Mannheimia succiniciproducens (strain KCTC 0769BP / MBEL55E).